Reading from the N-terminus, the 177-residue chain is Large ribosomal subunit protein uL6 (177 aa).

The protein belongs to the universal ribosomal protein uL6 family. Part of the 50S ribosomal subunit.

In terms of biological role, this protein binds to the 23S rRNA, and is important in its secondary structure. It is located near the subunit interface in the base of the L7/L12 stalk, and near the tRNA binding site of the peptidyltransferase center. This chain is Large ribosomal subunit protein uL6, found in Erwinia tasmaniensis (strain DSM 17950 / CFBP 7177 / CIP 109463 / NCPPB 4357 / Et1/99).